Reading from the N-terminus, the 78-residue chain is Large ribosomal subunit protein bL28 (78 aa).

Belongs to the bacterial ribosomal protein bL28 family.

This chain is Large ribosomal subunit protein bL28, found in Nostoc sp. (strain PCC 7120 / SAG 25.82 / UTEX 2576).